Here is a 357-residue protein sequence, read N- to C-terminus: Alanine racemase (357 aa).

The Proton acceptor; specific for D-alanine role is filled by K33. The residue at position 33 (K33) is an N6-(pyridoxal phosphate)lysine. R129 serves as a coordination point for substrate. Residue Y253 is the Proton acceptor; specific for L-alanine of the active site. M301 provides a ligand contact to substrate.

This sequence belongs to the alanine racemase family. The cofactor is pyridoxal 5'-phosphate.

The enzyme catalyses L-alanine = D-alanine. It functions in the pathway amino-acid biosynthesis; D-alanine biosynthesis; D-alanine from L-alanine: step 1/1. In terms of biological role, catalyzes the interconversion of L-alanine and D-alanine. May also act on other amino acids. The sequence is that of Alanine racemase (alr) from Pseudomonas fluorescens (strain ATCC BAA-477 / NRRL B-23932 / Pf-5).